A 166-amino-acid chain; its full sequence is Large ribosomal subunit protein uL10 (166 aa).

It belongs to the universal ribosomal protein uL10 family. As to quaternary structure, part of the ribosomal stalk of the 50S ribosomal subunit. The N-terminus interacts with L11 and the large rRNA to form the base of the stalk. The C-terminus forms an elongated spine to which L12 dimers bind in a sequential fashion forming a multimeric L10(L12)X complex.

Functionally, forms part of the ribosomal stalk, playing a central role in the interaction of the ribosome with GTP-bound translation factors. This is Large ribosomal subunit protein uL10 from Bacillus pumilus (strain SAFR-032).